The sequence spans 146 residues: Large ribosomal subunit protein uL15 (146 aa).

Positions 1 to 13 (MKLHELRPAEGSK) are enriched in basic and acidic residues. The disordered stretch occupies residues 1-54 (MKLHELRPAEGSKKAPKRVGRGNGSGLGKTAGKGHKGQNARSGGGVRPGFEGGQ). 2 stretches are compositionally biased toward gly residues: residues 21 to 31 (RGNGSGLGKTA) and 42 to 52 (SGGGVRPGFEG).

This sequence belongs to the universal ribosomal protein uL15 family. In terms of assembly, part of the 50S ribosomal subunit.

Binds to the 23S rRNA. The polypeptide is Large ribosomal subunit protein uL15 (Clostridium novyi (strain NT)).